A 431-amino-acid polypeptide reads, in one-letter code: Keratin, type I cytoskeletal 18 (431 aa).

Residues 2–83 (SLRTSYSVRS…SGSTGEIMGN (82 aa)) form a head region. Residue serine 12 is modified to Phosphoserine. A Phosphothreonine modification is found at threonine 13. Serine 22 and serine 36 each carry phosphoserine. Residues 84 to 119 (EKMAMQNLNDRLASYLEKVRILEQANSKLELKIREA) are coil 1A. The IF rod domain occupies 84–395 (EKMAMQNLND…RLLDGGDFKL (312 aa)). The segment at 120–136 (LEKRGPDVHDYSRFQPI) is linker 1. The interval 137–228 (VDELRKKIFD…KNHDNEVMEL (92 aa)) is coil 1B. Residues 229–252 (RNQISQSGVQVDVDAPKGQDLSQI) are linker 12. Positions 253–390 (MEEIRAKYEK…IATYRRLLDG (138 aa)) are coil 2. Positions 391–431 (GDFKLQDALEEQKKVKVMTVTQTLVDGKVVSSSTETKERKL) are tail.

Belongs to the intermediate filament family. Heterotetramer of two type I and two type II keratins. Keratin-18 associates with keratin-8. Post-translationally, proteolytically cleaved by caspases during epithelial cell apoptosis. Expressed in simple epithelia such as intestinal mucosa, bile duct, hepatocytes, renal tubules, endothelia, ocular lens epithelium, and in a variety of mesenchymally-derived cells such as blood vessel endothelia, pillar gill cells, optic nerve glial cells, fibroblasts, interstitial cells, chondrocytes and ovarian theca cells. Also expressed in epidermis, pharyngeal mucosa, mucosa of anterior esophagus, gill mucosa and cornea.

In terms of biological role, when phosphorylated, plays a role in filament reorganization. The protein is Keratin, type I cytoskeletal 18 of Danio rerio (Zebrafish).